A 402-amino-acid chain; its full sequence is Sensor protein kinase FleS (402 aa).

The Histidine kinase domain maps to 188-393; that stretch reads SLAHQIRTPL…CATLILPLIP (206 aa). Residue His191 is modified to Phosphohistidine; by autocatalysis.

It catalyses the reaction ATP + protein L-histidine = ADP + protein N-phospho-L-histidine.. Its function is as follows. Member of the two-component regulatory system FleS/FleR that regulates the expression of multiple genes involved in flagellar synthesis, adhesion, swarming, motility and antibiotic resistance. May function as a membrane-associated protein kinase that phosphorylates FleR in response to environmental signals leading to activation of specific gene promoters. The polypeptide is Sensor protein kinase FleS (fleS) (Pseudomonas aeruginosa (strain ATCC 15692 / DSM 22644 / CIP 104116 / JCM 14847 / LMG 12228 / 1C / PRS 101 / PAO1)).